The following is a 900-amino-acid chain: Bifunctional uridylyltransferase/uridylyl-removing enzyme (900 aa).

The uridylyltransferase stretch occupies residues 1–342; sequence MPQVDPELFD…PCEQPVQIQP (342 aa). Positions 343–705 are uridylyl-removing; sequence LNSRFQLRDG…TTQREFESGS (363 aa). The HD domain occupies 461–583; it reads VDAHTLNLIK…VGDQTHLDYL (123 aa). ACT domains follow at residues 706–789 and 816–891; these read QIFI…IIQR and VLEV…DNGR.

The protein belongs to the GlnD family. Requires Mg(2+) as cofactor.

The enzyme catalyses [protein-PII]-L-tyrosine + UTP = [protein-PII]-uridylyl-L-tyrosine + diphosphate. It carries out the reaction [protein-PII]-uridylyl-L-tyrosine + H2O = [protein-PII]-L-tyrosine + UMP + H(+). Its activity is regulated as follows. Uridylyltransferase (UTase) activity is inhibited by glutamine, while glutamine activates uridylyl-removing (UR) activity. Functionally, modifies, by uridylylation and deuridylylation, the PII regulatory proteins (GlnB and homologs), in response to the nitrogen status of the cell that GlnD senses through the glutamine level. Under low glutamine levels, catalyzes the conversion of the PII proteins and UTP to PII-UMP and PPi, while under higher glutamine levels, GlnD hydrolyzes PII-UMP to PII and UMP (deuridylylation). Thus, controls uridylylation state and activity of the PII proteins, and plays an important role in the regulation of nitrogen assimilation and metabolism. The protein is Bifunctional uridylyltransferase/uridylyl-removing enzyme of Pseudomonas aeruginosa (strain UCBPP-PA14).